A 456-amino-acid chain; its full sequence is MESTVMPGFDRISELPESLISQILLHLPTKASVKTSVLSTRWKNLWLNVPGLDLNCRDFPFQNNNEKLLIDFIDRFLQFNNESRLQKFKVDYSRDKIIKFSDRIGDAISRGIRVLDVESNTYYRDADDCIDYPCIEFMPLNLYSCKTLVSLKLSYSGLEDPGFVYLPCLKFMHLREVRWDSSGTMNLEKLVSGCPVLEELIYLHDDKLVVTRVRSRSLKRFSIPFRHKLSLFRRVTQTFEIDAPGLEYMSLKADHFDRIVVKNLTSLFMIDLDIKFIVGFGWMFDPEDLPKRNEIRDFLTGISSVRHMVISHNTVKALDLYSKVGLIPKFNNLSRVEAAFPSSLLQFLPAFLESFPNLKHLILETECPVEVMEKFELVNVPRCFVSTLEHVEIKGLFDWGEQDMKIASYFLENSAVLKKLILSFMGCPQHYSESDIYEELNKLTKRSPRCQIIIRC.

The region spanning F9–N55 is the F-box domain. 4 LRR repeats span residues L197–R220, A243–S266, I302–G325, and F355–N379. One can recognise an FBD domain in the interval M372–F424.

The protein is F-box/FBD/LRR-repeat protein At1g13780 of Arabidopsis thaliana (Mouse-ear cress).